Consider the following 1238-residue polypeptide: Virulence sensor protein BvgS (1238 aa).

A signal peptide spans 1-30 (MPAPHRLYPRSLICLAQALLAWALLAWAPA). The Cytoplasmic portion of the chain corresponds to 33 to 307 (SQELTLVGKA…REQQWMANHP (275 aa)). A helical transmembrane segment spans residues 308–331 (VVKVAVLNLFAPFTLFRTDEQFGG). Topologically, residues 332 to 541 (ISAAVLQLLQ…PRTWYAYRNE (210 aa)) are periplasmic. Residues 542–563 (IYLLIGLGLLSALLFLSWIVYL) form a helical membrane-spanning segment. At 564 to 1238 (RRQIRQRKRA…LEQRPHQGQP (675 aa)) the chain is on the cytoplasmic side. The region spanning 580–651 (QLEFMRVLID…MHEFLLTRMS (72 aa)) is the PAS domain. Residues 652–708 (AEREPRFEDRDVTLHGRTRHVYQWTVPYGDSLGELKGIIGGWIDITERAELLRELHD) enclose the PAC domain. Residues 726–948 (TMSHEIRTPM…TVSVDLRLTM (223 aa)) enclose the Histidine kinase domain. The residue at position 729 (His729) is a Phosphohistidine; by autocatalysis. Positions 974-1095 (RVLVVDDHKP…ALRQRLNEAA (122 aa)) constitute a Response regulatory domain. Residue Asp1023 is modified to 4-aspartylphosphate. One can recognise an HPt domain in the interval 1133 to 1228 (DEALIRQLLE…AALETQLRAW (96 aa)). His1172 carries the post-translational modification Phosphohistidine.

Post-translationally, activation requires a sequential transfer of a phosphate group from a His in the primary transmitter domain, to an Asp in the receiver domain and to a His in the secondary transmitter domain.

The protein localises to the cell inner membrane. It carries out the reaction ATP + protein L-histidine = ADP + protein N-phospho-L-histidine.. Its function is as follows. Member of the two-component regulatory system BvgS/BvgA. Phosphorylates BvgA via a four-step phosphorelay in response to environmental signals. This chain is Virulence sensor protein BvgS (bvgS), found in Bordetella bronchiseptica (strain ATCC BAA-588 / NCTC 13252 / RB50) (Alcaligenes bronchisepticus).